Consider the following 437-residue polypeptide: Transcriptional modulator WTM1 (437 aa).

One copy of the WD 1 repeat lies at 103–144 (YQGETVSKMAYLDKTGETTLLSMSKNGSLAWFKEGIKVPIHI). The residue at position 187 (threonine 187) is a Phosphothreonine. Serine 200 bears the Phosphoserine mark. 3 WD repeats span residues 221–259 (PGTT…KPIW), 264–304 (PKNG…AATT), and 326–366 (AGGD…SKYN). The disordered stretch occupies residues 368-404 (DDTIAPPQDATEESQTKSLRFLHKGGSRRSPKQIGRR). A Phosphothreonine modification is found at threonine 370. Positions 387–402 (RFLHKGGSRRSPKQIG) are enriched in basic residues. Threonine 406 is subject to Phosphothreonine.

As to quaternary structure, interacts with KAP122.

Its subcellular location is the cytoplasm. It localises to the nucleus. Its function is as follows. Transcriptional modulator with roles in meiotic regulation and silencing. Acts either as an adapter to facilitate nuclear import by KAP122 of the RNR2-RNR4 heterodimer, also called beta-beta' subunit, which corresponds to the small subunit of the ribonucleotide reductase (RNR); or as an anchor to retain RNR2-RNR4 in the nucleus. This is Transcriptional modulator WTM1 (WTM1) from Saccharomyces cerevisiae (strain ATCC 204508 / S288c) (Baker's yeast).